Reading from the N-terminus, the 84-residue chain is Small ribosomal subunit protein bS18 (84 aa).

Belongs to the bacterial ribosomal protein bS18 family. As to quaternary structure, part of the 30S ribosomal subunit. Forms a tight heterodimer with protein bS6.

In terms of biological role, binds as a heterodimer with protein bS6 to the central domain of the 16S rRNA, where it helps stabilize the platform of the 30S subunit. This is Small ribosomal subunit protein bS18 from Mycobacterium sp. (strain JLS).